The sequence spans 572 residues: Proline--tRNA ligase (572 aa).

This sequence belongs to the class-II aminoacyl-tRNA synthetase family. ProS type 1 subfamily. In terms of assembly, homodimer.

Its subcellular location is the cytoplasm. It carries out the reaction tRNA(Pro) + L-proline + ATP = L-prolyl-tRNA(Pro) + AMP + diphosphate. Functionally, catalyzes the attachment of proline to tRNA(Pro) in a two-step reaction: proline is first activated by ATP to form Pro-AMP and then transferred to the acceptor end of tRNA(Pro). As ProRS can inadvertently accommodate and process non-cognate amino acids such as alanine and cysteine, to avoid such errors it has two additional distinct editing activities against alanine. One activity is designated as 'pretransfer' editing and involves the tRNA(Pro)-independent hydrolysis of activated Ala-AMP. The other activity is designated 'posttransfer' editing and involves deacylation of mischarged Ala-tRNA(Pro). The misacylated Cys-tRNA(Pro) is not edited by ProRS. The chain is Proline--tRNA ligase from Salmonella arizonae (strain ATCC BAA-731 / CDC346-86 / RSK2980).